The sequence spans 395 residues: Lipoyl synthase, mitochondrial (395 aa).

The N-terminal 24 residues, 1-24 (MVKLPSASRIRSLATVPSTATRAF), are a transit peptide targeting the mitochondrion. Residues Cys-107, Cys-112, Cys-118, Cys-137, Cys-141, Cys-144, and Ser-357 each contribute to the [4Fe-4S] cluster site. One can recognise a Radical SAM core domain in the interval 122-346 (GKGNATATIM…KNVAEGMGFL (225 aa)).

Belongs to the radical SAM superfamily. Lipoyl synthase family. [4Fe-4S] cluster serves as cofactor.

It is found in the mitochondrion. The catalysed reaction is [[Fe-S] cluster scaffold protein carrying a second [4Fe-4S](2+) cluster] + N(6)-octanoyl-L-lysyl-[protein] + 2 oxidized [2Fe-2S]-[ferredoxin] + 2 S-adenosyl-L-methionine + 4 H(+) = [[Fe-S] cluster scaffold protein] + N(6)-[(R)-dihydrolipoyl]-L-lysyl-[protein] + 4 Fe(3+) + 2 hydrogen sulfide + 2 5'-deoxyadenosine + 2 L-methionine + 2 reduced [2Fe-2S]-[ferredoxin]. Its pathway is protein modification; protein lipoylation via endogenous pathway; protein N(6)-(lipoyl)lysine from octanoyl-[acyl-carrier-protein]: step 2/2. Its function is as follows. Catalyzes the radical-mediated insertion of two sulfur atoms into the C-6 and C-8 positions of the octanoyl moiety bound to the lipoyl domains of lipoate-dependent enzymes, thereby converting the octanoylated domains into lipoylated derivatives. The sequence is that of Lipoyl synthase, mitochondrial from Cryptococcus neoformans var. neoformans serotype D (strain B-3501A) (Filobasidiella neoformans).